A 201-amino-acid polypeptide reads, in one-letter code: Potassium-transporting ATPase KdpC subunit (201 aa).

A helical transmembrane segment spans residues 13-33 (IIFIIFTILCGGIYTIFITGI).

This sequence belongs to the KdpC family. As to quaternary structure, the system is composed of three essential subunits: KdpA, KdpB and KdpC.

The protein resides in the cell membrane. In terms of biological role, part of the high-affinity ATP-driven potassium transport (or Kdp) system, which catalyzes the hydrolysis of ATP coupled with the electrogenic transport of potassium into the cytoplasm. This subunit acts as a catalytic chaperone that increases the ATP-binding affinity of the ATP-hydrolyzing subunit KdpB by the formation of a transient KdpB/KdpC/ATP ternary complex. This is Potassium-transporting ATPase KdpC subunit from Clostridium botulinum (strain Alaska E43 / Type E3).